Consider the following 478-residue polypeptide: BTB/POZ domain-containing protein 17 (478 aa).

The signal sequence occupies residues Met-1 to Ala-28. Asn-61, Asn-100, Asn-195, and Asn-307 each carry an N-linked (GlcNAc...) asparagine glycan. The region spanning Ser-63 to Leu-132 is the BTB domain. A BACK domain is found at Ala-169–Gln-269.

The protein resides in the secreted. The sequence is that of BTB/POZ domain-containing protein 17 (Btbd17) from Mus musculus (Mouse).